The chain runs to 775 residues: Armadillo-like helical domain-containing protein 4 (775 aa).

A signal peptide spans 1–47; sequence MLQDSITGIVNSFNLFFPSTMSRPTLMPTCVAFCSILFLTLATGCQA. The Extracellular portion of the chain corresponds to 48–715; sequence FPKVERRETA…KDKAGYMSGM (668 aa). N-linked (GlcNAc...) asparagine glycosylation is present at Asn-76. Disordered regions lie at residues 120 to 148, 247 to 273, and 324 to 366; these read AGLLHPTSPGVYSSSEPVVSASEQEPGPS, VPGVDSTGDMEPDRERPSEMAADDGQS, and KFES…PSST. The segment covering 129–142 has biased composition (polar residues); that stretch reads GVYSSSEPVVSASE. The segment covering 324-335 has biased composition (basic and acidic residues); sequence KFESISRGRPPE. Residue Asn-476 is glycosylated (N-linked (GlcNAc...) asparagine). Residues 559–669 are disordered; it reads IPVLGSPMAP…PGITSQEPDI (111 aa). Polar residues predominate over residues 577–599; that stretch reads TISSALPSEGRTSPSISRPNTAA. Residues 606-640 show a composition bias toward acidic residues; that stretch reads LESEEVEDDEDEEDEEDEEEEEEDEEDEEDEEDKE. A helical transmembrane segment spans residues 716–736; the sequence is LVPVGVGIAGALFILGALYSI. Topologically, residues 737-775 are cytoplasmic; it reads KVMNRRRRNGFKRHKRKQREFNSMQDRVMLLADSSEDEF. Phosphoserine is present on residues Ser-770 and Ser-771.

Interacts with IL6ST; this interaction prevents IL6ST protein homodimerization and bridges ARMH4 with IL6R and STAT3 and therefore inhibits phosphorylation of STAT3 at 'Tyr-705'. Interacts (via cytoplasmic tail) with RICTOR; this interaction bridges ARMH4 to the mTORC2 complex and inhibits the mTORC2 kinase activity. Expressed in bone-marroew cells.

Its subcellular location is the membrane. May modulate immune response and may play a role in inflammation. Down-modulates STAT3 signaling throught direct interaction with IL6ST, resulting in the inhibition of phosphorylation of STAT3 at 'Tyr-705'. May negatively regulates AKT signaling by modulating the activity of mTORC2 complex through RICTOR interaction. This Mus musculus (Mouse) protein is Armadillo-like helical domain-containing protein 4.